The primary structure comprises 219 residues: Transmembrane protein 179B (219 aa).

The next 4 membrane-spanning stretches (helical) occupy residues 6 to 26 (PLLL…ITAA), 69 to 89 (ISVC…YIAF), 105 to 125 (LGLS…LKIG), and 167 to 187 (AETA…LVLI). The disordered stretch occupies residues 195–219 (IRPGTEDPSAPPSETEPFFNRPGRP).

It belongs to the TMEM179 family.

The protein resides in the membrane. This is Transmembrane protein 179B (tmem179b) from Danio rerio (Zebrafish).